The primary structure comprises 241 residues: uncharacterized protein (241 aa).

Positions 19-53 (KRIGYGMGEKSSAGSSRDQTYSVKPASDVKDKKKV) are disordered. Residues 30–39 (SAGSSRDQTY) show a composition bias toward polar residues.

This is an uncharacterized protein from Ostreid herpesvirus 1 (isolate France) (OsHV-1).